Consider the following 782-residue polypeptide: Structure-specific endonuclease subunit SLX4 (782 aa).

Disordered regions lie at residues 63-91 and 359-425; these read TPKP…MSAM and KEHE…KKSK. A compositionally biased stretch (basic residues) spans 73–84; the sequence is GLRKTGSRKSKK. Over residues 374–388 the composition is skewed to polar residues; the sequence is PAQSLTQSQVPSSID.

Belongs to the SLX4 family. In terms of assembly, forms a heterodimer with SLX1. Post-translationally, phosphorylated in response to DNA damage.

The protein localises to the nucleus. In terms of biological role, regulatory subunit of the SLX1-SLX4 structure-specific endonuclease that resolves DNA secondary structures generated during DNA repair and recombination. Has endonuclease activity towards branched DNA substrates, introducing single-strand cuts in duplex DNA close to junctions with ss-DNA. The chain is Structure-specific endonuclease subunit SLX4 from Scheffersomyces stipitis (strain ATCC 58785 / CBS 6054 / NBRC 10063 / NRRL Y-11545) (Yeast).